Reading from the N-terminus, the 111-residue chain is Nucleoid-associated protein LBA0378 (111 aa).

Belongs to the YbaB/EbfC family. As to quaternary structure, homodimer.

It is found in the cytoplasm. The protein localises to the nucleoid. Functionally, binds to DNA and alters its conformation. May be involved in regulation of gene expression, nucleoid organization and DNA protection. In Lactobacillus acidophilus (strain ATCC 700396 / NCK56 / N2 / NCFM), this protein is Nucleoid-associated protein LBA0378.